We begin with the raw amino-acid sequence, 602 residues long: mRNA-capping enzyme subunit beta (602 aa).

A disordered region spans residues 1 to 249 (MSEHHSKRAL…NESNSEETHD (249 aa)). Basic and acidic residues predominate over residues 15–42 (LVNHDENDKSKLQKLADNESSVRSDDNR). A compositionally biased stretch (low complexity) spans 48 to 64 (NIVNGNNSNSDLNSNGV). Over residues 65–76 (IEEDTDTDDDVG) the composition is skewed to acidic residues. Basic and acidic residues predominate over residues 88 to 110 (DYDKQDRFSPEKKRIQARKKDTS). The span at 114–128 (PSISNESPSNSKESS) shows a compositional bias: low complexity. Basic and acidic residues predominate over residues 141-169 (TDRKDSSEEKPDLTGPELVKEPDTNEYKR). A compositionally biased stretch (polar residues) spans 171 to 181 (SIQSITNAEDT). Basic and acidic residues-rich tracts occupy residues 213 to 222 (TEEHKPKTET) and 231 to 249 (QENK…ETHD). K276 acts as the N6-GMP-lysine intermediate in catalysis.

The protein belongs to the fungal TPase family. As to quaternary structure, heterodimer. The mRNA-capping enzyme is composed of two separate chains alpha and beta, respectively a mRNA guanylyltransferase and an mRNA 5'-triphosphate monophosphatase. Mg(2+) serves as cofactor.

It is found in the nucleus. It carries out the reaction a 5'-end triphospho-ribonucleoside in mRNA + H2O = a 5'-end diphospho-ribonucleoside in mRNA + phosphate + H(+). Functionally, first step of mRNA capping. Converts the 5'-triphosphate end of a nascent mRNA chain into a diphosphate end. The protein is mRNA-capping enzyme subunit beta (CET1) of Candida glabrata (strain ATCC 2001 / BCRC 20586 / JCM 3761 / NBRC 0622 / NRRL Y-65 / CBS 138) (Yeast).